We begin with the raw amino-acid sequence, 315 residues long: Lipoyl synthase (315 aa).

[4Fe-4S] cluster-binding residues include Cys63, Cys68, Cys74, Cys89, Cys93, Cys96, and Ser303. Residues 75–292 (FSKGTATFMI…EEKAYEMGFV (218 aa)) form the Radical SAM core domain.

The protein belongs to the radical SAM superfamily. Lipoyl synthase family. [4Fe-4S] cluster is required as a cofactor.

It is found in the cytoplasm. It carries out the reaction [[Fe-S] cluster scaffold protein carrying a second [4Fe-4S](2+) cluster] + N(6)-octanoyl-L-lysyl-[protein] + 2 oxidized [2Fe-2S]-[ferredoxin] + 2 S-adenosyl-L-methionine + 4 H(+) = [[Fe-S] cluster scaffold protein] + N(6)-[(R)-dihydrolipoyl]-L-lysyl-[protein] + 4 Fe(3+) + 2 hydrogen sulfide + 2 5'-deoxyadenosine + 2 L-methionine + 2 reduced [2Fe-2S]-[ferredoxin]. Its pathway is protein modification; protein lipoylation via endogenous pathway; protein N(6)-(lipoyl)lysine from octanoyl-[acyl-carrier-protein]: step 2/2. Functionally, catalyzes the radical-mediated insertion of two sulfur atoms into the C-6 and C-8 positions of the octanoyl moiety bound to the lipoyl domains of lipoate-dependent enzymes, thereby converting the octanoylated domains into lipoylated derivatives. This Chromobacterium violaceum (strain ATCC 12472 / DSM 30191 / JCM 1249 / CCUG 213 / NBRC 12614 / NCIMB 9131 / NCTC 9757 / MK) protein is Lipoyl synthase.